The primary structure comprises 377 residues: Alanine racemase, catabolic (377 aa).

Lys51 functions as the Proton acceptor; specific for D-alanine in the catalytic mechanism. Lys51 bears the N6-(pyridoxal phosphate)lysine mark. Arg150 contacts substrate. Tyr272 functions as the Proton acceptor; specific for L-alanine in the catalytic mechanism. Met320 is a substrate binding site.

The protein belongs to the alanine racemase family. Pyridoxal 5'-phosphate serves as cofactor.

It carries out the reaction L-alanine = D-alanine. Functionally, isomerizes L-alanine to D-alanine which is then oxidized to pyruvate by DadA. This is Alanine racemase, catabolic (dadX) from Rhizobium johnstonii (strain DSM 114642 / LMG 32736 / 3841) (Rhizobium leguminosarum bv. viciae).